A 199-amino-acid chain; its full sequence is ATP-dependent Clp protease proteolytic subunit (199 aa).

Ser-99 acts as the Nucleophile in catalysis. His-124 is a catalytic residue.

It belongs to the peptidase S14 family. As to quaternary structure, fourteen ClpP subunits assemble into 2 heptameric rings which stack back to back to give a disk-like structure with a central cavity, resembling the structure of eukaryotic proteasomes.

The protein localises to the cytoplasm. It carries out the reaction Hydrolysis of proteins to small peptides in the presence of ATP and magnesium. alpha-casein is the usual test substrate. In the absence of ATP, only oligopeptides shorter than five residues are hydrolyzed (such as succinyl-Leu-Tyr-|-NHMec, and Leu-Tyr-Leu-|-Tyr-Trp, in which cleavage of the -Tyr-|-Leu- and -Tyr-|-Trp bonds also occurs).. Its function is as follows. Cleaves peptides in various proteins in a process that requires ATP hydrolysis. Has a chymotrypsin-like activity. Plays a major role in the degradation of misfolded proteins. This is ATP-dependent Clp protease proteolytic subunit from Lactococcus lactis subsp. cremoris (strain SK11).